Reading from the N-terminus, the 392-residue chain is HORMA domain-containing protein 1 (392 aa).

Positions histidine 25 to valine 227 constitute an HORMA domain. The segment at serine 323–arginine 359 is disordered. Residues lysine 341–serine 353 are compositionally biased toward polar residues. Serine 375 is subject to Phosphoserine. The Nuclear localization signal motif lies at lysine 381–arginine 384.

Interacts with HORMAD2. Interacts with IHO1. In terms of processing, phosphorylated at Ser-375 in a SPO11-dependent manner. In terms of tissue distribution, specifically expressed in meiotic germ cells.

The protein resides in the nucleus. It localises to the chromosome. Its subcellular location is the cytoplasm. In terms of biological role, plays a key role in meiotic progression. Regulates 3 different functions during meiosis: ensures that sufficient numbers of processed DNA double-strand breaks (DSBs) are available for successful homology search by increasing the steady-state numbers of single-stranded DSB ends. Promotes synaptonemal-complex formation independently of its role in homology search. Plays a key role in the male mid-pachytene checkpoint and the female meiotic prophase checkpoint: required for efficient build-up of ATR activity on unsynapsed chromosome regions, a process believed to form the basis of meiotic silencing of unsynapsed chromatin (MSUC) and meiotic prophase quality control in both sexes. The sequence is that of HORMA domain-containing protein 1 from Mus musculus (Mouse).